The sequence spans 268 residues: Nickel import ATP-binding protein NikE (268 aa).

One can recognise an ABC transporter domain in the interval 4–252 (LNVSGLSHHY…SSDAGRVLQN (249 aa)). An ATP-binding site is contributed by 45-52 (GRSGCGKS).

It belongs to the ABC transporter superfamily. Nickel importer (TC 3.A.1.5.3) family. In terms of assembly, the complex is composed of two ATP-binding proteins (NikD and NikE), two transmembrane proteins (NikB and NikC) and a solute-binding protein (NikA).

The protein resides in the cell inner membrane. The enzyme catalyses Ni(2+)(out) + ATP + H2O = Ni(2+)(in) + ADP + phosphate + H(+). Part of the ABC transporter complex NikABCDE involved in nickel import. Responsible for energy coupling to the transport system. The polypeptide is Nickel import ATP-binding protein NikE (Shigella sonnei (strain Ss046)).